We begin with the raw amino-acid sequence, 122 residues long: UPF0231 protein VV1_1657 (122 aa).

This sequence belongs to the UPF0231 family.

The sequence is that of UPF0231 protein VV1_1657 from Vibrio vulnificus (strain CMCP6).